We begin with the raw amino-acid sequence, 401 residues long: Short chain dehydrogenase/reductase dpchH (401 aa).

N16 carries an N-linked (GlcNAc...) asparagine glycan. Residues V51–L71 traverse the membrane as a helical segment. NAD(+) is bound by residues K72–D80, T99–G100, and A118–V120. Residue N242 is glycosylated (N-linked (GlcNAc...) asparagine). Y275 serves as the catalytic Proton acceptor. Residues Y275–K279 and G308–I310 each bind NAD(+). An N-linked (GlcNAc...) asparagine glycan is attached at N386.

It localises to the membrane. It functions in the pathway secondary metabolite biosynthesis; terpenoid biosynthesis. Its function is as follows. Short chain dehydrogenase/reductase; part of the gene cluster that mediates the biosynthesis of the diterpenoid pyrones higginsianins A and B. The first step of the pathway is the synthesis of the alpha-pyrone moiety by the polyketide synthase dpchA via condensation of one acetyl-CoA starter unit with 3 malonyl-CoA units and 2 methylations. The alpha-pyrone is then combined with geranylgeranyl pyrophosphate (GGPP) formed by the GGPP synthase dpchD through the action of the prenyltransferase dpchC to yield a linear alpha-pyrone diterpenoid. Subsequent steps in the diterpenoid pyrone biosynthetic pathway involve the decalin core formation, which is initiated by the epoxidation of the C10-C11 olefin by the FAD-dependent oxidoreductase dpchE, and is followed by a cyclization cascade catalyzed by the terpene cyclase dpchB. The short chain dehydrogenase/reductase dpchG then oxidizes the 8S hydroxy group to a ketone and the short chain dehydrogenase/reductase dpchH reduces the ketone to the 8R hydroxy group to yield higginsianin B. Finally, the FAD-dependent oxidoreductase dpchF converts higginsianin B into higginsianin A. This Colletotrichum higginsianum (strain IMI 349063) (Crucifer anthracnose fungus) protein is Short chain dehydrogenase/reductase dpchH.